Reading from the N-terminus, the 315-residue chain is Diacylglycerol kinase (315 aa).

The 132-residue stretch at 1 to 132 folds into the DAGKc domain; it reads MRKRARIIYN…VDIGKMNNRY (132 aa). ATP is bound by residues 10-14, Thr41, 67-73, and Thr94; these read NPTSG and GDGTLNE. Mg(2+)-binding residues include Lys213, Asp216, and Tyr218. Glu273 serves as the catalytic Proton acceptor.

It belongs to the diacylglycerol/lipid kinase family. As to quaternary structure, homodimer. It depends on Mg(2+) as a cofactor.

It carries out the reaction a 1,2-diacyl-sn-glycerol + ATP = a 1,2-diacyl-sn-glycero-3-phosphate + ADP + H(+). Its function is as follows. Catalyzes the phosphorylation of diacylglycerol (DAG) into phosphatidic acid. Is a key enzyme involved in the production of lipoteichoic acid by reintroducing DAG formed from the breakdown of membrane phospholipids into the phosphatidylglycerol biosynthetic pathway. This chain is Diacylglycerol kinase (dagK), found in Staphylococcus aureus (strain bovine RF122 / ET3-1).